Consider the following 219-residue polypeptide: Probable GTP-binding protein EngB (219 aa).

The 184-residue stretch at 24–207 (VQPEIAFAGR…HELIESWVRP (184 aa)) folds into the EngB-type G domain. GTP is bound by residues 32–39 (GRSNAGKS), 59–63 (GRTQH), 81–84 (DLPG), 148–151 (TKCD), and 186–188 (FSA). Mg(2+)-binding residues include serine 39 and threonine 61.

The protein belongs to the TRAFAC class TrmE-Era-EngA-EngB-Septin-like GTPase superfamily. EngB GTPase family. Mg(2+) is required as a cofactor.

In terms of biological role, necessary for normal cell division and for the maintenance of normal septation. The sequence is that of Probable GTP-binding protein EngB from Burkholderia ambifaria (strain MC40-6).